We begin with the raw amino-acid sequence, 468 residues long: UDP-N-acetylmuramate--L-alanine ligase (468 aa).

Position 121 to 127 (121 to 127 (GSHGKTT)) interacts with ATP.

The protein belongs to the MurCDEF family.

Its subcellular location is the cytoplasm. The enzyme catalyses UDP-N-acetyl-alpha-D-muramate + L-alanine + ATP = UDP-N-acetyl-alpha-D-muramoyl-L-alanine + ADP + phosphate + H(+). It functions in the pathway cell wall biogenesis; peptidoglycan biosynthesis. Its function is as follows. Cell wall formation. The chain is UDP-N-acetylmuramate--L-alanine ligase from Borreliella burgdorferi (strain ATCC 35210 / DSM 4680 / CIP 102532 / B31) (Borrelia burgdorferi).